Reading from the N-terminus, the 321-residue chain is RNLGKVIDTLTCGFADLMGYIPLVGAPLGGAARALAHGVRVLEDGVNYATGNLPGCSFSLFLLALLSCLTVPASAYQVRNSTGLYHVTNDCPNSSIVYEAADAILHAPGCVPCVREGNASRCWVAMTPTVATRDGRLPTTQLRRHIDLLVGSATLCSALYVGDLCGSIFLVGQLFTFSPRRHWTTQGCNCSIYPGHITGHRMAWDMMMNWSPTTALVVAQLLRIPQAILDMIAGAHWGVLAGIAYFSMVGNWAKVLVVLLLFAGVDAETTVTGGSAAHGALGIASLFNQGARQNIQLINTNGSWHINSTALNCNDSLNTGW.

Over 1–52 (RNLGKVIDTLTCGFADLMGYIPLVGAPLGGAARALAHGVRVLEDGVNYATGN) the chain is Cytoplasmic. The segment at 6–57 (VIDTLTCGFADLMGYIPLVGAPLGGAARALAHGVRVLEDGVNYATGNLPGCS) is interaction with APOA2. Residues 48–51 (YATG) form an important for lipid droplets localization region. A helical transmembrane segment spans residues 53–73 (LPGCSFSLFLLALLSCLTVPA). The propeptide at 62–75 (LLALLSCLTVPASA) is ER anchor for the core protein, removed in mature form by host signal peptidase. Over 74–242 (SAYQVRNSTG…AGAHWGVLAG (169 aa)) the chain is Lumenal. N-linked (GlcNAc...) asparagine; by host glycosylation is found at Asn80, Asn93, and Asn118. Residues 149 to 180 (LVGSATLCSALYVGDLCGSIFLVGQLFTFSPR) are important for fusion. Asn189 is a glycosylation site (N-linked (GlcNAc...) asparagine; by host). A helical membrane pass occupies residues 243 to 263 (IAYFSMVGNWAKVLVVLLLFA). The Lumenal segment spans residues 264–321 (GVDAETTVTGGSAAHGALGIASLFNQGARQNIQLINTNGSWHINSTALNCNDSLNTGW). The interval 268–294 (ETTVTGGSAAHGALGIASLFNQGARQN) is HVR1. N-linked (GlcNAc...) (high mannose) asparagine; by host glycosylation is found at Asn301, Asn307, and Asn314.

Belongs to the hepacivirus polyprotein family. Homooligomer. Interacts with E1 (via C-terminus). Interacts with the non-structural protein 5A. Interacts (via N-terminus) with host STAT1 (via SH2 domain); this interaction results in decreased STAT1 phosphorylation and ubiquitin-mediated proteasome-dependent STAT1 degradation, leading to decreased IFN-stimulated gene transcription. Interacts with host STAT3; this interaction constitutively activates STAT3. Interacts with host LTBR receptor. Interacts with host TNFRSF1A receptor and possibly induces apoptosis. Interacts with host HNRPK. Interacts with host YWHAE. Interacts with host UBE3A/E6AP. Interacts with host DDX3X. Interacts with host APOA2. Interacts with host RXRA protein. Interacts with host SP110 isoform 3/Sp110b; this interaction sequesters the transcriptional corepressor SP110 away from the nucleus. Interacts with host CREB3 nuclear transcription protein; this interaction triggers cell transformation. Interacts with host ACY3. Interacts with host C1QR1. Interacts with host RBM24; this interaction, which enhances the interaction of the mature core protein with 5'-UTR, may inhibit viral translation and favor replication. Interacts with host EIF2AK2/PKR; this interaction induces the autophosphorylation of EIF2AK2. Part of the viral assembly initiation complex composed of NS2, E1, E2, NS3, NS4A, NS5A and the mature core protein. In terms of assembly, forms a heterodimer with envelope glycoprotein E2. Interacts with mature core protein. Interacts with protease NS2. The heterodimer E1/E2 interacts with host CLDN1; this interaction plays a role in viral entry into host cell. Interacts with host SPSB2 (via C-terminus). Part of the viral assembly initiation complex composed of NS2, E1, E2, NS3, NS4A, NS5A and the mature core protein. As to quaternary structure, forms a heterodimer with envelope glycoprotein E1. Interacts with host CD81 and SCARB1 receptors; these interactions play a role in viral entry into host cell. Interacts with host EIF2AK2/PKR; this interaction inhibits EIF2AK2 and probably allows the virus to evade the innate immune response. Interacts with host CD209/DC-SIGN and CLEC4M/DC-SIGNR. Interact with host SPCS1; this interaction is essential for viral particle assembly. Interacts with protease NS2. The heterodimer E1/E2 interacts with host CLDN1; this interaction plays a role in viral entry into host cell. Part of the viral assembly initiation complex composed of NS2, E1, E2, NS3, NS4A, NS5A and the mature core protein. Specific enzymatic cleavages in vivo yield mature proteins. The structural proteins, core, E1, E2 and p7 are produced by proteolytic processing by host signal peptidases. The core protein precursor is synthesized as a 23 kDa, which is retained in the ER membrane through the hydrophobic signal peptide. Cleavage by the signal peptidase releases the 21 kDa mature core protein. The cleavage of the core protein precursor occurs between aminoacids 176 and 188 but the exact cleavage site is not known. Some degraded forms of the core protein appear as well during the course of infection. The other proteins (p7, NS2, NS3, NS4A, NS4B, NS5A and NS5B) are cleaved by the viral proteases. Autoprocessing between NS2 and NS3 is mediated by the NS2 cysteine protease catalytic domain and regulated by the NS3 N-terminal domain. Post-translationally, phosphorylated by host PKC and PKA. In terms of processing, ubiquitinated; mediated by UBE3A and leading to core protein subsequent proteasomal degradation. Highly N-glycosylated.

Its subcellular location is the host endoplasmic reticulum membrane. It is found in the host mitochondrion membrane. The protein resides in the virion. It localises to the host cytoplasm. The protein localises to the host nucleus. Its subcellular location is the host lipid droplet. It is found in the virion membrane. Its function is as follows. Packages viral RNA to form a viral nucleocapsid, and promotes virion budding. Participates in the viral particle production as a result of its interaction with the non-structural protein 5A. Binds RNA and may function as a RNA chaperone to induce the RNA structural rearrangements taking place during virus replication. Modulates viral translation initiation by interacting with viral IRES and 40S ribosomal subunit. Affects various cell signaling pathways, host immunity and lipid metabolism. Prevents the establishment of cellular antiviral state by blocking the interferon-alpha/beta (IFN-alpha/beta) and IFN-gamma signaling pathways and by blocking the formation of phosphorylated STAT1 and promoting ubiquitin-mediated proteasome-dependent degradation of STAT1. Activates STAT3 leading to cellular transformation. Regulates the activity of cellular genes, including c-myc and c-fos. May repress the promoter of p53, and sequester CREB3 and SP110 isoform 3/Sp110b in the cytoplasm. Represses cell cycle negative regulating factor CDKN1A, thereby interrupting an important check point of normal cell cycle regulation. Targets transcription factors involved in the regulation of inflammatory responses and in the immune response: suppresses TNF-induced NF-kappa-B activation, and activates AP-1. Binds to dendritic cells (DCs) via C1QR1, resulting in down-regulation of T-lymphocytes proliferation. Alters lipid metabolism by interacting with hepatocellular proteins involved in lipid accumulation and storage. Induces up-regulation of FAS promoter activity, and thereby contributes to the increased triglyceride accumulation in hepatocytes (steatosis). Functionally, forms a heterodimer with envelope glycoprotein E2, which mediates virus attachment to the host cell, virion internalization through clathrin-dependent endocytosis and fusion with host membrane. Fusion with the host cell is most likely mediated by both E1 and E2, through conformational rearrangements of the heterodimer required for fusion rather than a classical class II fusion mechanism. E1/E2 heterodimer binds host apolipoproteins such as APOB and ApoE thereby forming a lipo-viro-particle (LVP). APOE associated to the LVP allows the initial virus attachment to cell surface receptors such as the heparan sulfate proteoglycans (HSPGs), syndecan-1 (SDC1), syndecan-1 (SDC2), the low-density lipoprotein receptor (LDLR) and scavenger receptor class B type I (SCARB1). The cholesterol transfer activity of SCARB1 allows E2 exposure and binding of E2 to SCARB1 and the tetraspanin CD81. E1/E2 heterodimer binding on CD81 activates the epithelial growth factor receptor (EGFR) signaling pathway. Diffusion of the complex E1-E2-EGFR-SCARB1-CD81 to the cell lateral membrane allows further interaction with Claudin 1 (CLDN1) and occludin (OCLN) to finally trigger HCV entry. Forms a heterodimer with envelope glycoprotein E1, which mediates virus attachment to the host cell, virion internalization through clathrin-dependent endocytosis and fusion with host membrane. Fusion with the host cell is most likely mediated by both E1 and E2, through conformational rearrangements of the heterodimer required for fusion rather than a classical class II fusion mechanism. The interaction between envelope glycoprotein E2 and host apolipoprotein E/APOE allows the proper assembly, maturation and infectivity of the viral particles. This interaction is probably promoted via the up-regulation of cellular autophagy by the virus. E1/E2 heterodimer binds host apolipoproteins such as APOB and APOE thereby forming a lipo-viro-particle (LVP). APOE associated to the LVP allows the initial virus attachment to cell surface receptors such as the heparan sulfate proteoglycans (HSPGs), syndecan-1 (SDC1), syndecan-1 (SDC2), the low-density lipoprotein receptor (LDLR) and scavenger receptor class B type I (SCARB1). The cholesterol transfer activity of SCARB1 allows E2 exposure and binding of E2 to SCARB1 and the tetraspanin CD81. E1/E2 heterodimer binding on CD81 activates the epithelial growth factor receptor (EGFR) signaling pathway. Diffusion of the complex E1-E2-EGFR-SCARB1-CD81 to the cell lateral membrane allows further interaction with Claudin 1 (CLDN1) and occludin (OCLN) to finally trigger HCV entry. Inhibits host EIF2AK2/PKR activation, preventing the establishment of an antiviral state. Viral ligand for CD209/DC-SIGN and CLEC4M/DC-SIGNR, which are respectively found on dendritic cells (DCs), and on liver sinusoidal endothelial cells and macrophage-like cells of lymph node sinuses. These interactions allow the capture of circulating HCV particles by these cells and subsequent facilitated transmission to permissive cells such as hepatocytes and lymphocyte subpopulations. The sequence is that of Genome polyprotein from Homo sapiens (Human).